The primary structure comprises 565 residues: Granule-bound starch synthase 1b, chloroplastic/amyloplastic (565 aa).

The N-terminal 34 residues, 1–34 (VFLSMRNKTQLAKRRATNYETHRNSSRTSSPIVC), are a transit peptide targeting the chloroplast. Lys52 is a binding site for ADP-alpha-D-glucose.

This sequence belongs to the glycosyltransferase 1 family. Bacterial/plant glycogen synthase subfamily.

The protein localises to the plastid. The protein resides in the chloroplast. It localises to the amyloplast. The catalysed reaction is an NDP-alpha-D-glucose + [(1-&gt;4)-alpha-D-glucosyl](n) = [(1-&gt;4)-alpha-D-glucosyl](n+1) + a ribonucleoside 5'-diphosphate + H(+). Its pathway is glycan biosynthesis; starch biosynthesis. Functionally, involved in the synthesis of amylose in endosperm. The polypeptide is Granule-bound starch synthase 1b, chloroplastic/amyloplastic (Hordeum vulgare (Barley)).